The chain runs to 272 residues: MSPATVLDSILEGVRADVAAREALISLSEIKAAAAAAPPPLDVMAALREPGIGVIAEVKRASPSAGSLATIADPAKLARAYEDGGARIISVLTEERRFHGSLDDLDAVRAAVSIPVLRKDFVVQPYQIHEARAHGADMLLLIVAALEQSALVSMLDRTESLGMTALVEVHTEEEADRALRAGAKVIGVNARDLATLEVDRDCFARIAPGLPSNVIRIAESGVRGTGDLLAYAGAGADAVLVGEGLVKSGDPRAAVADLVTAGTHPSCPKPAR.

Belongs to the TrpC family.

It carries out the reaction 1-(2-carboxyphenylamino)-1-deoxy-D-ribulose 5-phosphate + H(+) = (1S,2R)-1-C-(indol-3-yl)glycerol 3-phosphate + CO2 + H2O. It functions in the pathway amino-acid biosynthesis; L-tryptophan biosynthesis; L-tryptophan from chorismate: step 4/5. This is Indole-3-glycerol phosphate synthase from Mycolicibacterium paratuberculosis (strain ATCC BAA-968 / K-10) (Mycobacterium paratuberculosis).